A 366-amino-acid chain; its full sequence is UDP-N-acetylglucosamine--N-acetylmuramyl-(pentapeptide) pyrophosphoryl-undecaprenol N-acetylglucosamine transferase (366 aa).

UDP-N-acetyl-alpha-D-glucosamine contacts are provided by residues 10–12 (TGG), Asn124, Arg165, Ser195, Ile250, and Gln295.

This sequence belongs to the glycosyltransferase 28 family. MurG subfamily.

It localises to the cell inner membrane. It catalyses the reaction di-trans,octa-cis-undecaprenyl diphospho-N-acetyl-alpha-D-muramoyl-L-alanyl-D-glutamyl-meso-2,6-diaminopimeloyl-D-alanyl-D-alanine + UDP-N-acetyl-alpha-D-glucosamine = di-trans,octa-cis-undecaprenyl diphospho-[N-acetyl-alpha-D-glucosaminyl-(1-&gt;4)]-N-acetyl-alpha-D-muramoyl-L-alanyl-D-glutamyl-meso-2,6-diaminopimeloyl-D-alanyl-D-alanine + UDP + H(+). It participates in cell wall biogenesis; peptidoglycan biosynthesis. Functionally, cell wall formation. Catalyzes the transfer of a GlcNAc subunit on undecaprenyl-pyrophosphoryl-MurNAc-pentapeptide (lipid intermediate I) to form undecaprenyl-pyrophosphoryl-MurNAc-(pentapeptide)GlcNAc (lipid intermediate II). The polypeptide is UDP-N-acetylglucosamine--N-acetylmuramyl-(pentapeptide) pyrophosphoryl-undecaprenol N-acetylglucosamine transferase (Thermodesulfovibrio yellowstonii (strain ATCC 51303 / DSM 11347 / YP87)).